A 227-amino-acid chain; its full sequence is Protein p26 (227 aa).

As to quaternary structure, self-associates.

Its subcellular location is the host cell junction. It localises to the host plasmodesma. The sequence is that of Protein p26 from Lettuce infectious yellows virus (isolate United States/92) (LIYV).